The sequence spans 104 residues: L-rhamnose mutarotase (104 aa).

Tyrosine 18 lines the substrate pocket. The active-site Proton donor is the histidine 22. Residues tyrosine 41 and 76-77 (WW) each bind substrate.

It belongs to the rhamnose mutarotase family. As to quaternary structure, homodimer.

It is found in the cytoplasm. The catalysed reaction is alpha-L-rhamnose = beta-L-rhamnose. It participates in carbohydrate metabolism; L-rhamnose metabolism. Its function is as follows. Involved in the anomeric conversion of L-rhamnose. The polypeptide is L-rhamnose mutarotase (Opitutus terrae (strain DSM 11246 / JCM 15787 / PB90-1)).